The sequence spans 291 residues: Aspartate carbamoyltransferase catalytic subunit (291 aa).

2 residues coordinate carbamoyl phosphate: R49 and T50. Residue K77 participates in L-aspartate binding. Residues R99, H127, and Q130 each coordinate carbamoyl phosphate. L-aspartate-binding residues include R160 and R210. Residues G249 and P250 each coordinate carbamoyl phosphate.

This sequence belongs to the aspartate/ornithine carbamoyltransferase superfamily. ATCase family. Heterododecamer (2C3:3R2) of six catalytic PyrB chains organized as two trimers (C3), and six regulatory PyrI chains organized as three dimers (R2).

It catalyses the reaction carbamoyl phosphate + L-aspartate = N-carbamoyl-L-aspartate + phosphate + H(+). It participates in pyrimidine metabolism; UMP biosynthesis via de novo pathway; (S)-dihydroorotate from bicarbonate: step 2/3. Catalyzes the condensation of carbamoyl phosphate and aspartate to form carbamoyl aspartate and inorganic phosphate, the committed step in the de novo pyrimidine nucleotide biosynthesis pathway. The sequence is that of Aspartate carbamoyltransferase catalytic subunit from Sulfurimonas denitrificans (strain ATCC 33889 / DSM 1251) (Thiomicrospira denitrificans (strain ATCC 33889 / DSM 1251)).